A 236-amino-acid polypeptide reads, in one-letter code: LexA repressor (236 aa).

A disordered region spans residues 1–25; that stretch reads MNDSNDTSVAGGAAGADSRVLSADS. Residues 51–71 constitute a DNA-binding region (H-T-H motif); that stretch reads IREIGDAVGLTSTSSVAHQLR. Active-site for autocatalytic cleavage activity residues include serine 160 and lysine 197.

This sequence belongs to the peptidase S24 family. Homodimer.

The catalysed reaction is Hydrolysis of Ala-|-Gly bond in repressor LexA.. Its function is as follows. Represses a number of genes involved in the response to DNA damage (SOS response), including recA and lexA. In the presence of single-stranded DNA, RecA interacts with LexA causing an autocatalytic cleavage which disrupts the DNA-binding part of LexA, leading to derepression of the SOS regulon and eventually DNA repair. The protein is LexA repressor of Mycobacterium tuberculosis (strain ATCC 25177 / H37Ra).